The chain runs to 232 residues: Large ribosomal subunit protein uL1 (232 aa).

Belongs to the universal ribosomal protein uL1 family. In terms of assembly, part of the 50S ribosomal subunit.

In terms of biological role, binds directly to 23S rRNA. The L1 stalk is quite mobile in the ribosome, and is involved in E site tRNA release. Protein L1 is also a translational repressor protein, it controls the translation of the L11 operon by binding to its mRNA. The protein is Large ribosomal subunit protein uL1 of Coxiella burnetii (strain RSA 331 / Henzerling II).